The following is a 356-amino-acid chain: UDP-N-acetylglucosamine--N-acetylmuramyl-(pentapeptide) pyrophosphoryl-undecaprenol N-acetylglucosamine transferase (356 aa).

Residues 15–17 (TGG), N127, R163, S191, I244, 263–268 (ALTVSE), and Q288 contribute to the UDP-N-acetyl-alpha-D-glucosamine site.

It belongs to the glycosyltransferase 28 family. MurG subfamily.

The protein localises to the cell inner membrane. The catalysed reaction is di-trans,octa-cis-undecaprenyl diphospho-N-acetyl-alpha-D-muramoyl-L-alanyl-D-glutamyl-meso-2,6-diaminopimeloyl-D-alanyl-D-alanine + UDP-N-acetyl-alpha-D-glucosamine = di-trans,octa-cis-undecaprenyl diphospho-[N-acetyl-alpha-D-glucosaminyl-(1-&gt;4)]-N-acetyl-alpha-D-muramoyl-L-alanyl-D-glutamyl-meso-2,6-diaminopimeloyl-D-alanyl-D-alanine + UDP + H(+). It participates in cell wall biogenesis; peptidoglycan biosynthesis. Cell wall formation. Catalyzes the transfer of a GlcNAc subunit on undecaprenyl-pyrophosphoryl-MurNAc-pentapeptide (lipid intermediate I) to form undecaprenyl-pyrophosphoryl-MurNAc-(pentapeptide)GlcNAc (lipid intermediate II). In Yersinia pseudotuberculosis serotype O:1b (strain IP 31758), this protein is UDP-N-acetylglucosamine--N-acetylmuramyl-(pentapeptide) pyrophosphoryl-undecaprenol N-acetylglucosamine transferase.